A 341-amino-acid chain; its full sequence is Ribosomal RNA small subunit methyltransferase C (341 aa).

The protein belongs to the methyltransferase superfamily. RsmC family. As to quaternary structure, monomer.

The protein resides in the cytoplasm. It carries out the reaction guanosine(1207) in 16S rRNA + S-adenosyl-L-methionine = N(2)-methylguanosine(1207) in 16S rRNA + S-adenosyl-L-homocysteine + H(+). Functionally, specifically methylates the guanine in position 1207 of 16S rRNA in the 30S particle. The protein is Ribosomal RNA small subunit methyltransferase C of Pseudoalteromonas translucida (strain TAC 125).